We begin with the raw amino-acid sequence, 539 residues long: Chaperonin GroEL (539 aa).

ATP-binding positions include 29-32 (TLGP), 86-90 (DGTTT), Gly-413, 479-481 (DAL), and Asp-495.

This sequence belongs to the chaperonin (HSP60) family. As to quaternary structure, forms a cylinder of 14 subunits composed of two heptameric rings stacked back-to-back. Interacts with the co-chaperonin GroES.

The protein resides in the cytoplasm. The enzyme catalyses ATP + H2O + a folded polypeptide = ADP + phosphate + an unfolded polypeptide.. Together with its co-chaperonin GroES, plays an essential role in assisting protein folding. The GroEL-GroES system forms a nano-cage that allows encapsulation of the non-native substrate proteins and provides a physical environment optimized to promote and accelerate protein folding. The chain is Chaperonin GroEL from Thermosipho africanus (strain TCF52B).